A 1017-amino-acid chain; its full sequence is uncharacterized protein (1017 aa).

A signal peptide (tat-type signal) is located at residues 1–34 (MGNLTMSRRTFVKTAAITGAAAAAFGASTHTALA). Positions 45–103 (DTVAVKTCCRGCGKMECGVKVIVQNGRAIRVEGDEGAFQSMGNCCTKSQSSIQAAYHPD) constitute a 4Fe-4S Mo/W bis-MGD-type domain. Cys-53, Cys-56, Cys-61, and Cys-89 together coordinate [4Fe-4S] cluster. The active-site Electron donor/acceptor is the Lys-91.

The protein belongs to the prokaryotic molybdopterin-containing oxidoreductase family. [4Fe-4S] cluster serves as cofactor. The cofactor is Mo-bis(molybdopterin guanine dinucleotide). Post-translationally, predicted to be exported by the Tat system. The position of the signal peptide cleavage has not been experimentally proven.

This is an uncharacterized protein from Eggerthella lenta (strain ATCC 25559 / DSM 2243 / CCUG 17323 / JCM 9979 / KCTC 3265 / NCTC 11813 / VPI 0255 / 1899 B) (Eubacterium lentum).